A 67-amino-acid polypeptide reads, in one-letter code: Small ribosomal subunit protein bS21 (67 aa).

This sequence belongs to the bacterial ribosomal protein bS21 family.

This Granulibacter bethesdensis (strain ATCC BAA-1260 / CGDNIH1) protein is Small ribosomal subunit protein bS21.